The chain runs to 638 residues: 1-deoxy-D-xylulose-5-phosphate synthase (638 aa).

Residues histidine 71 and 112 to 114 (SHA) each bind thiamine diphosphate. Position 144 (aspartate 144) interacts with Mg(2+). Thiamine diphosphate contacts are provided by residues 145–146 (GA), asparagine 173, tyrosine 284, and glutamate 365. Asparagine 173 contributes to the Mg(2+) binding site.

This sequence belongs to the transketolase family. DXPS subfamily. Homodimer. Requires Mg(2+) as cofactor. Thiamine diphosphate serves as cofactor.

It carries out the reaction D-glyceraldehyde 3-phosphate + pyruvate + H(+) = 1-deoxy-D-xylulose 5-phosphate + CO2. The protein operates within metabolic intermediate biosynthesis; 1-deoxy-D-xylulose 5-phosphate biosynthesis; 1-deoxy-D-xylulose 5-phosphate from D-glyceraldehyde 3-phosphate and pyruvate: step 1/1. Functionally, catalyzes the acyloin condensation reaction between C atoms 2 and 3 of pyruvate and glyceraldehyde 3-phosphate to yield 1-deoxy-D-xylulose-5-phosphate (DXP). The chain is 1-deoxy-D-xylulose-5-phosphate synthase from Mycobacterium sp. (strain KMS).